Reading from the N-terminus, the 230-residue chain is Phosphatidylserine decarboxylase proenzyme (230 aa).

Catalysis depends on serine 186, which acts as the Schiff-base intermediate with substrate; via pyruvic acid. The residue at position 186 (serine 186) is a Pyruvic acid (Ser); by autocatalysis.

It belongs to the phosphatidylserine decarboxylase family. PSD-A subfamily. Heterodimer of a large membrane-associated beta subunit and a small pyruvoyl-containing alpha subunit. Requires pyruvate as cofactor. Is synthesized initially as an inactive proenzyme. Formation of the active enzyme involves a self-maturation process in which the active site pyruvoyl group is generated from an internal serine residue via an autocatalytic post-translational modification. Two non-identical subunits are generated from the proenzyme in this reaction, and the pyruvate is formed at the N-terminus of the alpha chain, which is derived from the carboxyl end of the proenzyme. The post-translation cleavage follows an unusual pathway, termed non-hydrolytic serinolysis, in which the side chain hydroxyl group of the serine supplies its oxygen atom to form the C-terminus of the beta chain, while the remainder of the serine residue undergoes an oxidative deamination to produce ammonia and the pyruvoyl prosthetic group on the alpha chain.

It localises to the cell membrane. The enzyme catalyses a 1,2-diacyl-sn-glycero-3-phospho-L-serine + H(+) = a 1,2-diacyl-sn-glycero-3-phosphoethanolamine + CO2. It functions in the pathway phospholipid metabolism; phosphatidylethanolamine biosynthesis; phosphatidylethanolamine from CDP-diacylglycerol: step 2/2. Its function is as follows. Catalyzes the formation of phosphatidylethanolamine (PtdEtn) from phosphatidylserine (PtdSer). In Wolbachia sp. subsp. Brugia malayi (strain TRS), this protein is Phosphatidylserine decarboxylase proenzyme.